The chain runs to 603 residues: Baeyer-Villiger monooxygenase (603 aa).

FAD-binding positions include glutamate 94, 102-105 (TWYW), aspartate 114, tyrosine 120, and valine 164. Residue 112–114 (HCD) participates in NADP(+) binding. Residues 248–254 (TGATGVQ), 271–272 (RT), and 386–387 (KR) each bind NADP(+).

Belongs to the FAD-binding monooxygenase family. It depends on FAD as a cofactor.

Catalyzes a Baeyer-Villiger oxidation reaction, i.e. the insertion of an oxygen atom into a carbon-carbon bond adjacent to a carbonyl, which converts ketones to esters or lactones using NADPH and/or NADH as an electron donor. Thus, can convert bicyclo[3.2.0]hept-2-en-6-one into the oxidative lactone products 2-oxabicyclo[3.3.0]oct-6-en-3-one and 3-oxabicyclo[3.3.0]oct-6-en-2-one. Is also able to catalyze the sulfoxidation of methyl phenyl sulfide (thioanisole). The sequence is that of Baeyer-Villiger monooxygenase from Streptomyces coelicolor (strain ATCC BAA-471 / A3(2) / M145).